The sequence spans 403 residues: tRNA methyltransferase 10 homolog C (403 aa).

The N-terminal 39 residues, 1–39 (MAAFLKMSVSVNFFRPFTRFLVPFTLHRKRNNLTILQRY), are a transit peptide targeting the mitochondrion. The residue at position 84 (serine 84) is a Phosphoserine. The stretch at 138-169 (TKEKVKKARQIKKEMKAAAREEAKNIKLLETT) forms a coiled coil. One can recognise an SAM-dependent MTase TRM10-type domain in the interval 191–383 (MGWKGAQAMQ…QFVPKRKHTG (193 aa)).

It belongs to the class IV-like SAM-binding methyltransferase superfamily. TRM10 family. In terms of assembly, component of mitochondrial ribonuclease P, a complex composed of TRMT10C/MRPP1, HSD17B10/MRPP2 and PRORP/MRPP3. Interacts with HSD17B10/MRPP2; forming the MRPP1-MRPP2 subcomplex of the mitochondrial ribonuclease P complex. Interacts with GRSF1.

It localises to the mitochondrion matrix. The protein localises to the mitochondrion nucleoid. It catalyses the reaction adenosine(9) in tRNA + S-adenosyl-L-methionine = N(1)-methyladenosine(9) in tRNA + S-adenosyl-L-homocysteine + H(+). The enzyme catalyses guanosine(9) in tRNA + S-adenosyl-L-methionine = N(1)-methylguanosine(9) in tRNA + S-adenosyl-L-homocysteine + H(+). It carries out the reaction an adenosine in mRNA + S-adenosyl-L-methionine = an N(1)-methyladenosine in mRNA + S-adenosyl-L-homocysteine + H(+). Its function is as follows. Mitochondrial tRNA N(1)-methyltransferase involved in mitochondrial tRNA maturation. Component of mitochondrial ribonuclease P, a complex composed of TRMT10C/MRPP1, HSD17B10/MRPP2 and PRORP/MRPP3, which cleaves tRNA molecules in their 5'-ends. Together with HSD17B10/MRPP2, forms a subcomplex of the mitochondrial ribonuclease P, named MRPP1-MRPP2 subcomplex, which displays functions that are independent of the ribonuclease P activity. The MRPP1-MRPP2 subcomplex catalyzes the formation of N(1)-methylguanine and N(1)-methyladenine at position 9 (m1G9 and m1A9, respectively) in tRNAs; TRMT10C/MRPP1 acting as the catalytic N(1)-methyltransferase subunit. The MRPP1-MRPP2 subcomplex also acts as a tRNA maturation platform: following 5'-end cleavage by the mitochondrial ribonuclease P complex, the MRPP1-MRPP2 subcomplex enhances the efficiency of 3'-processing catalyzed by ELAC2, retains the tRNA product after ELAC2 processing and presents the nascent tRNA to the mitochondrial CCA tRNA nucleotidyltransferase TRNT1 enzyme. In addition to tRNA N(1)-methyltransferase activity, TRMT10C/MRPP1 also acts as a mRNA N(1)-methyltransferase by mediating methylation of adenosine residues at the N(1) position of MT-ND5 mRNA. Associates with mitochondrial DNA complexes at the nucleoids to initiate RNA processing and ribosome assembly. The chain is tRNA methyltransferase 10 homolog C from Homo sapiens (Human).